Reading from the N-terminus, the 493-residue chain is MSELTALTIAEARDKLKAKAITATELTDAYLSAIDAANDAINAYVAVTHDQARSMAKASDERIAKGEAGALEGIPLGVKDLFATKGVHTQACSHILDGFKPEYESTVTANLWADGAVMLGKLNMDEFAMGSSNETSYYGPVKNPWRAKGSNADLVPGGSSGGSAAAVAAHLCAGATATDTGGSIRQPAAFTGTVGIKPTYGRVSRWGTVAFASSLDQAGPIARDVRDAAILMKSTASLDLKDTTSVDLPVPDYEAALGRSVKGMKIGIPREYRVDGMPGEIEELWQKGIQYLKDAGAEIVDISLPHTKYALPAYYIVAPAEASSNLARYDGVRYGLRVPGKDIADMYEQTRAAGFGKEVKRRIMIGTYVLSAGYYDAYYLRAQKVRTLIKKDFEDVFAKGVDAILTPATPSAAFGLADEVLANDPVKMYLNDIFTVTVNMAGLPGIAVPAGLNGQGLPLGLQLIGRPFEEETLFQAAHVIEQAAGRFTPAKWW.

Active-site charge relay system residues include Lys-79 and Ser-159. Ser-183 functions as the Acyl-ester intermediate in the catalytic mechanism.

It belongs to the amidase family. GatA subfamily. As to quaternary structure, heterotrimer of A, B and C subunits.

It carries out the reaction L-glutamyl-tRNA(Gln) + L-glutamine + ATP + H2O = L-glutaminyl-tRNA(Gln) + L-glutamate + ADP + phosphate + H(+). In terms of biological role, allows the formation of correctly charged Gln-tRNA(Gln) through the transamidation of misacylated Glu-tRNA(Gln) in organisms which lack glutaminyl-tRNA synthetase. The reaction takes place in the presence of glutamine and ATP through an activated gamma-phospho-Glu-tRNA(Gln). This Brucella suis (strain ATCC 23445 / NCTC 10510) protein is Glutamyl-tRNA(Gln) amidotransferase subunit A.